Consider the following 564-residue polypeptide: MPETPNKVLIIGSGPIIVGQAAEFDYSGSQACKALREEGVEVVLVNSNPATIMTDPNMADRVYLEPLDARIVAKIIEEERPDGILPTLGGQTGLNIAVELDEMGVLEEYDVEVLGTSVETIVRAEDRDEFRAFMKKIGEPVCASEAVSSVEEAKEVAEEIGYPVVVRPAYTLGGTGGGIAEDEEELKRVVERGLEYSRVNQVLIEEYVGGWAEIEYEVMRDGSGNCITVCSMENVDPMGVHTGESIVVAPAQTLTEEEHQMLRSAALHIIDALGVEGGCNIQFALHRETGEYRVIEVNPRVSRSSALASKATGYPIARIAAKIAIGLRLDEIENQVTGETYAAFEPALDYVVVKIPRWPFDKFPEANRTLGTEMKSVGEVMAIGRTFEEALQKAIRSLEIGEPGLGPSPEELEADPEEIRRKIETPNDRRIFCIYAALKRGLMSVEEISELSGIDPWFVEKVKRIVEMEHEIVRRKDELLEFIRTGEADEETVEFVREVKRTGFSDEQIAELLGVDEDEIREARLGVGVEATYKLVDTCAAEFAAVSPYFYSTYEEECEALRYD.

The carboxyphosphate synthetic domain stretch occupies residues 1 to 399 (MPETPNKVLI…ALQKAIRSLE (399 aa)). Residues arginine 127, arginine 167, glycine 173, glycine 174, glutamate 206, valine 208, glutamate 213, glycine 239, valine 240, histidine 241, glutamine 282, and glutamate 296 each coordinate ATP. The 195-residue stretch at 131–325 (RAFMKKIGEP…IARIAAKIAI (195 aa)) folds into the ATP-grasp domain. Mg(2+) is bound by residues glutamine 282, glutamate 296, and asparagine 298. The Mn(2+) site is built by glutamine 282, glutamate 296, and asparagine 298. The segment at 400–560 (IGEPGLGPSP…YSTYEEECEA (161 aa)) is oligomerization domain.

This sequence belongs to the CarB family. Composed of two chains; the small (or glutamine) chain promotes the hydrolysis of glutamine to ammonia, which is used by the large (or ammonia) chain to synthesize carbamoyl phosphate. Tetramer of heterodimers (alpha,beta)4. The cofactor is Mg(2+). Mn(2+) is required as a cofactor.

The catalysed reaction is hydrogencarbonate + L-glutamine + 2 ATP + H2O = carbamoyl phosphate + L-glutamate + 2 ADP + phosphate + 2 H(+). The enzyme catalyses hydrogencarbonate + NH4(+) + 2 ATP = carbamoyl phosphate + 2 ADP + phosphate + 2 H(+). It functions in the pathway amino-acid biosynthesis; L-arginine biosynthesis; carbamoyl phosphate from bicarbonate: step 1/1. The protein operates within pyrimidine metabolism; UMP biosynthesis via de novo pathway; (S)-dihydroorotate from bicarbonate: step 1/3. Functionally, large subunit of the glutamine-dependent carbamoyl phosphate synthetase (CPSase). CPSase catalyzes the formation of carbamoyl phosphate from the ammonia moiety of glutamine, carbonate, and phosphate donated by ATP, constituting the first step of 2 biosynthetic pathways, one leading to arginine and/or urea and the other to pyrimidine nucleotides. The large subunit (synthetase) binds the substrates ammonia (free or transferred from glutamine from the small subunit), hydrogencarbonate and ATP and carries out an ATP-coupled ligase reaction, activating hydrogencarbonate by forming carboxy phosphate which reacts with ammonia to form carbamoyl phosphate. The protein is Carbamoyl phosphate synthase large chain, N-terminal section (carB1) of Methanopyrus kandleri (strain AV19 / DSM 6324 / JCM 9639 / NBRC 100938).